Consider the following 194-residue polypeptide: Peptidyl-tRNA hydrolase (194 aa).

Tyr16 serves as a coordination point for tRNA. The active-site Proton acceptor is His21. The tRNA site is built by Phe67, Asn69, and Asn115.

This sequence belongs to the PTH family. As to quaternary structure, monomer.

The protein resides in the cytoplasm. The catalysed reaction is an N-acyl-L-alpha-aminoacyl-tRNA + H2O = an N-acyl-L-amino acid + a tRNA + H(+). Functionally, hydrolyzes ribosome-free peptidyl-tRNAs (with 1 or more amino acids incorporated), which drop off the ribosome during protein synthesis, or as a result of ribosome stalling. Its function is as follows. Catalyzes the release of premature peptidyl moieties from peptidyl-tRNA molecules trapped in stalled 50S ribosomal subunits, and thus maintains levels of free tRNAs and 50S ribosomes. The sequence is that of Peptidyl-tRNA hydrolase from Klebsiella pneumoniae (strain 342).